The chain runs to 1154 residues: FERM domain-containing protein A (1154 aa).

5 disordered regions span residues 122–149 (NNNSSIITTTTTTTNNNNNSNCGSSSSS), 432–468 (NLSSSGGSGNGSGSGNGSSSSSSNSSSGNNNNHNHHN), 715–734 (NKNNNNNNNSNNSSTSSSSS), 771–794 (SNSNSNILNNSNDEQSTSTSTSSS), and 961–980 (TNGSSSSSSNNNGGNSNNGI). 2 consecutive FERM domains span residues 218–547 (PLHQ…PSIQ) and 666–1103 (REIV…QTKL). Residues 437-447 (GGSGNGSGSGN) show a composition bias toward gly residues. Residues 448-463 (GSSSSSSNSSSGNNNN) show a composition bias toward low complexity.

Its function is as follows. Key regulator of adhesion dynamics, it acts as an anti-adhesive. Plays a critical role in the regulation of cell-cell adhesion, multi-cellular development and, in particular, the formation of the organising center known as the tip. Required for turnover of paxillin-adhesion sites during cell migration. Plays a major role in normal cell shape, cell-substrate adhesion and actin cytoskeleton organization. The protein is FERM domain-containing protein A (frmA) of Dictyostelium discoideum (Social amoeba).